A 116-amino-acid polypeptide reads, in one-letter code: Putative oxygen-evolving enhancer protein 1 (116 aa).

The protein belongs to the PsbO family.

The protein resides in the plastid. Its subcellular location is the chloroplast thylakoid membrane. Functionally, stabilizes the manganese cluster which is the primary site of water splitting. This Pinus strobus (Eastern white pine) protein is Putative oxygen-evolving enhancer protein 1.